A 275-amino-acid polypeptide reads, in one-letter code: Lectin (275 aa).

The first 30 residues, 1–30, serve as a signal peptide directing secretion; sequence MASLQTQMISFYLIFLSILLTTIFFFKVNS. D-glucose-binding residues include aspartate 111 and glycine 129. Mn(2+)-binding residues include glutamate 149 and aspartate 151. Positions 151, 153, 155, and 159 each coordinate Ca(2+). Aspartate 159 and histidine 166 together coordinate Mn(2+). Positions 211–217 are excised as a propeptide; sequence NSLEEEN. Positions 246 and 247 each coordinate D-glucose. Residues 270-275 constitute a propeptide that is removed on maturation; sequence KQAADA.

It belongs to the leguminous lectin family. Heterotetramer of two alpha and two beta chains. Post-translationally, the mature form consists of two chains, alpha and beta, produced by cleavage of the immature protein. These remain cleaved, yet fold together to form one subunit.

D-mannose specific lectin. This Lens culinaris subsp. tomentosus (Lentil) protein is Lectin.